The primary structure comprises 290 residues: Undecaprenyl-diphosphatase (290 aa).

A run of 6 helical transmembrane segments spans residues 39–59 (PGAA…LIYF), 85–105 (AQMG…GITL), 118–138 (LIAT…RLAA), 202–222 (SFLL…KDVG), 230–250 (PTIF…AWFM), and 261–281 (FVIY…AGVL).

It belongs to the UppP family.

The protein localises to the cell membrane. It carries out the reaction di-trans,octa-cis-undecaprenyl diphosphate + H2O = di-trans,octa-cis-undecaprenyl phosphate + phosphate + H(+). Its function is as follows. Catalyzes the dephosphorylation of undecaprenyl diphosphate (UPP). Confers resistance to bacitracin. The chain is Undecaprenyl-diphosphatase from Streptomyces griseus subsp. griseus (strain JCM 4626 / CBS 651.72 / NBRC 13350 / KCC S-0626 / ISP 5235).